The following is a 131-amino-acid chain: Large ribosomal subunit protein bL12c (131 aa).

Basic and acidic residues predominate over residues 106–125; it reads KDNTNKENSEEIKQQLEEAG. Residues 106-131 are disordered; that stretch reads KDNTNKENSEEIKQQLEEAGAKVSIK.

It belongs to the bacterial ribosomal protein bL12 family. As to quaternary structure, homodimer. Part of the ribosomal stalk of the 50S ribosomal subunit. Forms a multimeric L10(L12)X complex, where L10 forms an elongated spine to which 2 to 4 L12 dimers bind in a sequential fashion. Binds GTP-bound translation factors.

Its subcellular location is the plastid. It localises to the chloroplast. Its function is as follows. Forms part of the ribosomal stalk which helps the ribosome interact with GTP-bound translation factors. Is thus essential for accurate translation. This chain is Large ribosomal subunit protein bL12c, found in Gracilaria tenuistipitata var. liui (Red alga).